We begin with the raw amino-acid sequence, 157 residues long: Protein Smg homolog (157 aa).

The protein belongs to the Smg family.

The protein is Protein Smg homolog of Photobacterium profundum (strain SS9).